A 712-amino-acid polypeptide reads, in one-letter code: Polyribonucleotide nucleotidyltransferase (712 aa).

The Mg(2+) site is built by Asp-484 and Asp-490. The region spanning 551-610 is the KH domain; the sequence is PKVFTIQIHPDKIRDIIGPGGKVIRAIQAETGTRVDVDDSGLVKVSAVNLEEGEAALQMI. Residues 620-688 enclose the S1 motif domain; the sequence is GAVYEGTVVK…KDGKIRLSRK (69 aa). Positions 689 to 712 are disordered; sequence ALLEEENGKSGPENGAPQRDKNRH.

It belongs to the polyribonucleotide nucleotidyltransferase family. It depends on Mg(2+) as a cofactor.

The protein resides in the cytoplasm. It carries out the reaction RNA(n+1) + phosphate = RNA(n) + a ribonucleoside 5'-diphosphate. Involved in mRNA degradation. Catalyzes the phosphorolysis of single-stranded polyribonucleotides processively in the 3'- to 5'-direction. The protein is Polyribonucleotide nucleotidyltransferase of Desulfatibacillum aliphaticivorans.